The sequence spans 119 residues: Large ribosomal subunit protein bL19 (119 aa).

Belongs to the bacterial ribosomal protein bL19 family.

Functionally, this protein is located at the 30S-50S ribosomal subunit interface and may play a role in the structure and function of the aminoacyl-tRNA binding site. The sequence is that of Large ribosomal subunit protein bL19 from Photobacterium profundum (strain SS9).